Reading from the N-terminus, the 406-residue chain is Phosphorylase b kinase gamma catalytic chain, liver/testis isoform (406 aa).

The Protein kinase domain occupies 24–291 (YDPKDVIGRG…AEQALQHPFF (268 aa)). ATP-binding positions include 30-38 (IGRGVSSVV) and lysine 53. Catalysis depends on aspartate 153, which acts as the Proton acceptor. Positions 306–330 (QRFRVAVWTVLAAGRVALSAHRIRP) are calmodulin-binding (domain-N). The calmodulin-binding (domain-C) stretch occupies residues 346–370 (VRRLIDNCAFRLYGHWVKKGEQQNR).

Belongs to the protein kinase superfamily. CAMK Ser/Thr protein kinase family. Hexadecamer of 4 heterotetramers, each composed of alpha, beta, gamma, and delta subunits. Alpha (PHKA1 or PHKA2) and beta (PHKB) are regulatory subunits, gamma (PHKG1 or PHKG2) is the catalytic subunit, and delta is calmodulin.

The enzyme catalyses 2 ATP + phosphorylase b = 2 ADP + phosphorylase a.. Functionally, catalytic subunit of the phosphorylase b kinase (PHK), which mediates the neural and hormonal regulation of glycogen breakdown (glycogenolysis) by phosphorylating and thereby activating glycogen phosphorylase. May regulate glycogeneolysis in the testis. In vitro, phosphorylates PYGM. The sequence is that of Phosphorylase b kinase gamma catalytic chain, liver/testis isoform (PHKG2) from Bos taurus (Bovine).